The chain runs to 162 residues: Lipoprotein signal peptidase (162 aa).

The next 2 helical transmembrane spans lie at P66–L86 and L92–V112. Active-site residues include D119 and D137. Residues A132 to I152 form a helical membrane-spanning segment.

This sequence belongs to the peptidase A8 family.

Its subcellular location is the cell inner membrane. The catalysed reaction is Release of signal peptides from bacterial membrane prolipoproteins. Hydrolyzes -Xaa-Yaa-Zaa-|-(S,diacylglyceryl)Cys-, in which Xaa is hydrophobic (preferably Leu), and Yaa (Ala or Ser) and Zaa (Gly or Ala) have small, neutral side chains.. Its pathway is protein modification; lipoprotein biosynthesis (signal peptide cleavage). Its function is as follows. This protein specifically catalyzes the removal of signal peptides from prolipoproteins. The chain is Lipoprotein signal peptidase from Geobacter metallireducens (strain ATCC 53774 / DSM 7210 / GS-15).